Consider the following 227-residue polypeptide: Mediator of RNA polymerase II transcription subunit 18 (227 aa).

The protein belongs to the Mediator complex subunit 18 family. As to quaternary structure, component of the Mediator complex.

It is found in the nucleus. Component of the Mediator complex, a coactivator involved in the regulated transcription of nearly all RNA polymerase II-dependent genes. Mediator functions as a bridge to convey information from gene-specific regulatory proteins to the basal RNA polymerase II transcription machinery. Mediator is recruited to promoters by direct interactions with regulatory proteins and serves as a scaffold for the assembly of a functional preinitiation complex with RNA polymerase II and the general transcription factors. The chain is Mediator of RNA polymerase II transcription subunit 18 (mdt-18) from Caenorhabditis briggsae.